The following is a 203-amino-acid chain: High frequency lysogenization protein HflD homolog (203 aa).

The protein belongs to the HflD family.

It localises to the cytoplasm. It is found in the cell inner membrane. In Dichelobacter nodosus (strain VCS1703A), this protein is High frequency lysogenization protein HflD homolog.